Here is a 735-residue protein sequence, read N- to C-terminus: Ion-translocating oxidoreductase complex subunit C (735 aa).

2 consecutive 4Fe-4S ferredoxin-type domains span residues 368-397 (MGAPQEEKSCIRCSACADACPADLLPQQLY) and 407-436 (KATAHHIADCIECGACAWVCPSNIPLVQYF). [4Fe-4S] cluster contacts are provided by Cys-377, Cys-380, Cys-383, Cys-387, Cys-416, Cys-419, Cys-422, and Cys-426. The interval 538–715 (KQAAHPMADS…PADPRKAAVA (178 aa)) is disordered. A compositionally biased stretch (low complexity) spans 556 to 565 (KAAVEAAIAR).

The protein belongs to the 4Fe4S bacterial-type ferredoxin family. RnfC subfamily. As to quaternary structure, the complex is composed of six subunits: RsxA, RsxB, RsxC, RsxD, RsxE and RsxG. It depends on [4Fe-4S] cluster as a cofactor.

It is found in the cell inner membrane. Part of a membrane-bound complex that couples electron transfer with translocation of ions across the membrane. Required to maintain the reduced state of SoxR. The sequence is that of Ion-translocating oxidoreductase complex subunit C from Salmonella typhimurium (strain LT2 / SGSC1412 / ATCC 700720).